The following is a 159-amino-acid chain: Ribosomal RNA large subunit methyltransferase H (159 aa).

S-adenosyl-L-methionine contacts are provided by residues Leu-76, Gly-108, and 127-132 (FSKMTF).

This sequence belongs to the RNA methyltransferase RlmH family. In terms of assembly, homodimer.

It is found in the cytoplasm. The enzyme catalyses pseudouridine(1915) in 23S rRNA + S-adenosyl-L-methionine = N(3)-methylpseudouridine(1915) in 23S rRNA + S-adenosyl-L-homocysteine + H(+). In terms of biological role, specifically methylates the pseudouridine at position 1915 (m3Psi1915) in 23S rRNA. The chain is Ribosomal RNA large subunit methyltransferase H from Clostridium botulinum (strain Okra / Type B1).